A 565-amino-acid chain; its full sequence is NAD-dependent malic enzyme (565 aa).

The active-site Proton donor is Y104. Residue R157 participates in NAD(+) binding. Residue K175 is the Proton acceptor of the active site. A divalent metal cation contacts are provided by E246, D247, and D270. NAD(+) is bound by residues D270 and N418.

Belongs to the malic enzymes family. Homotetramer. Mg(2+) serves as cofactor. Requires Mn(2+) as cofactor.

The enzyme catalyses (S)-malate + NAD(+) = pyruvate + CO2 + NADH. It catalyses the reaction oxaloacetate + H(+) = pyruvate + CO2. The polypeptide is NAD-dependent malic enzyme (Sodalis glossinidius (strain morsitans)).